A 193-amino-acid polypeptide reads, in one-letter code: Immunogenic protein MPB70 (193 aa).

Residues 1–30 (MKVKNTIAATSFAAAGLAALAVAVSPPAAA) form the signal peptide. The region spanning 57 to 189 (QDPVAVAASN…ATVYMIDSVL (133 aa)) is the FAS1 domain.

As to quaternary structure, generally found as a monomer; homodimer in culture fluids.

The protein resides in the secreted. This Mycobacterium bovis (strain ATCC BAA-935 / AF2122/97) protein is Immunogenic protein MPB70 (mpb70).